Consider the following 344-residue polypeptide: Probable Delta(7)-sterol 5(6)-desaturase (344 aa).

Helical transmembrane passes span 76 to 96 (LSLF…FASL), 123 to 143 (QTNA…VAEV), and 160 to 180 (WYDF…IYWI). Residues 167–292 (PLFIMFTDFG…FTTLWDRLGG (126 aa)) form the Fatty acid hydroxylase domain. Positions 181–185 (HRGLH) match the Histidine box-1 motif. The short motif at 194 to 198 (HKPHH) is the Histidine box-2 element. Residues 224 to 244 (HIFPFIFPLQKMAYVGLFVFI) traverse the membrane as a helical segment. Residues 269-273 (HSVHH) carry the Histidine box-3 motif.

This sequence belongs to the sterol desaturase family. Fe cation is required as a cofactor.

It localises to the endoplasmic reticulum membrane. The enzyme catalyses a Delta(7)-sterol + 2 Fe(II)-[cytochrome b5] + O2 + 2 H(+) = a Delta(5),Delta(7)-sterol + 2 Fe(III)-[cytochrome b5] + 2 H2O. Its pathway is steroid metabolism; ergosterol biosynthesis; ergosterol from zymosterol: step 3/5. Functionally, catalyzes the introduction of a C-5 double bond in the B ring of ergosterol. May contribute to the regulation of ergosterol biosynthesis. The protein is Probable Delta(7)-sterol 5(6)-desaturase of Neurospora crassa (strain ATCC 24698 / 74-OR23-1A / CBS 708.71 / DSM 1257 / FGSC 987).